A 753-amino-acid polypeptide reads, in one-letter code: Inactive protein-tyrosine phosphatase egg-5 (753 aa).

Disordered stretches follow at residues 26 to 46 (TSLQSFCSGNTDDSSADSTDN) and 77 to 116 (RKKVKKLAQKDRRSKERLNGNSEEDAIEVPRGAPSTYAAP). Residues 35 to 46 (NTDDSSADSTDN) show a composition bias toward low complexity. Over residues 84–94 (AQKDRRSKERL) the composition is skewed to basic and acidic residues. The region spanning 408-661 (MERRFEILEN…IFVHRLVAFF (254 aa)) is the Tyrosine-protein phosphatase domain.

The protein belongs to the protein-tyrosine phosphatase family. Part of a complex, consisting of pseudophosphatases egg-3, egg-4, egg-5 and kinase mbk-2; this complex is required for the oocyte-to-zygote transition. Interacts (via tyrosine-protein phosphatase domain) with kinase mbk-2 (via 'Tyr-619' and 'Tyr-621'); mbk-2 tyrosine phosphorylation enhances the interaction.

It is found in the cytoplasm. Its subcellular location is the cell cortex. Inactive phosphatase which acts redundantly with egg-4 in the oocyte-to-zygote transition. Required for polarized cortical actin cytoskeleton rearrangement in the oocyte before and after fertilization. Together with egg-4, required for the cortical localization of kinase mbk-2 in maturing oocyte until the end of meiosis I. Also required for kinase mbk-2, pseudophosphatase egg-3 and chitin synthase chs-1 localization to cytoplasmic foci after fertilization. In Caenorhabditis elegans, this protein is Inactive protein-tyrosine phosphatase egg-5.